The primary structure comprises 339 residues: Trace amine-associated receptor 1 (339 aa).

Topologically, residues 1 to 24 (MMPFCHNIINISCVKNNWSNDVRA) are extracellular. 3 cysteine pairs are disulfide-bonded: Cys-5/Cys-178, Cys-13/Cys-88, and Cys-96/Cys-182. Asn-10 and Asn-17 each carry an N-linked (GlcNAc...) asparagine glycan. A helical membrane pass occupies residues 25–49 (SLYSLMVLIILTTLVGNLIVIVSIS). Residues 50–59 (HFKQLHTPTN) are Cytoplasmic-facing. Residues 60–81 (WLIHSMATVDFLLGCLVMPYSM) form a helical membrane-spanning segment. At 82 to 96 (VRSAEHCWYFGEVFC) the chain is on the extracellular side. Residues 97–119 (KIHTSTDIMLSSASIFHLSFISI) traverse the membrane as a helical segment. Asp-103 serves as a coordination point for 2-phenylethylamine. The Cytoplasmic segment spans residues 120-139 (DRYYAVCDPLRYKAKMNILV). The helical transmembrane segment at 140–161 (ICVMIFISWSVPAVFAFGMIFL) threads the bilayer. The Extracellular portion of the chain corresponds to 162–188 (ELNFKGAEEIYYKHVHCRGGCSVFFSK). An extracellular Loop 2 (ECL2) region spans residues 175–186 (HVHCRGGCSVFF). The chain crosses the membrane as a helical span at residues 189 to 211 (ISGVLTFMTSFYIPGSIMLCVYY). Over 212–249 (RIYLIAKEQARLISDANQKLQIGLEMKNGISQSKERKA) the chain is Cytoplasmic. A helical membrane pass occupies residues 250–273 (VKTLGIVMGVFLICWCPFFICTVM). Over 274 to 286 (DPFLHYIIPPTLN) the chain is Extracellular. Residues 287 to 307 (DVLIWFGYLNSTFNPMVYAFF) traverse the membrane as a helical segment. The Cytoplasmic segment spans residues 308–339 (YPWFRKALKMMLFGKIFQKDSSRCKLFLELSS).

Belongs to the G-protein coupled receptor 1 family. In terms of tissue distribution, expressed at low level in both the central and peripheral nervous system. Moderately expressed in stomach. Low levels in amygdala, kidney, and lung, and small intestine. Trace amounts in cerebellum, dorsal root ganglia, hippocampus, hypothalamus, liver, medulla, pancreas, pituitary, pontine reticular formation, prostate, skeletal muscle and spleen.

The protein resides in the endomembrane system. It localises to the endoplasmic reticulum membrane. The protein localises to the cell membrane. With respect to regulation, activated by SEP-363856 small molecule: IHCH-7179 acts both as an agonist activator for HTR1A and TAAR1. Intracellular G-protein coupled receptor for trace amines, which recognizes endogenous amine-containing metabolites such as beta-phenylethylamine (beta-PEA), 3-iodothyronamine (T1AM), isoamylamine (IAA), cadaverine (CAD), cyclohexylamine (CHA), p-tyramine (p-TYR), trimethylamine (TMA), octopamine and tryptamine. Also functions as a receptor for various drugs and psychoactive substances, such as amphetamine and methamphetamine. Unresponsive to classical biogenic amines, such as epinephrine and histamine and only partially activated by dopamine and serotonin. Expressed in both the central and peripheral nervous system: TAAR1 activation regulates the activity of several neurotransmitter signaling pathways by (1) decreasing the basal firing rates of the neurons involved and by (2) lowering the sensitivity of receptors to neurotransmitters. Ligand binding causes a conformation change that triggers signaling via guanine nucleotide-binding proteins (G proteins) and modulates the activity of downstream effectors. TAAR1 is coupled with different G(i)/G(o)-, G(s)- or G(q)/G(11) classes of G alpha proteins depending on the ligand. CAD-binding is coupled to G(i)/G(o) G alpha proteins and mediates inhibition of adenylate cyclase activity. T1AM- or beta-PEA-binding is coupled to G(s) G alpha proteins and mediates activation of adenylate cyclase activity. CHA- or IAA-binding is coupled to G(q)/G(11) G alpha proteins and activates phospholipase C-beta, releasing diacylglycerol (DAG) and inositol 1,4,5-trisphosphate (IP3) second messengers. TMA-binding is coupled with all three G(i)/G(o)-, G(s)- or G(q)/G(11) G alpha protein subtypes. Amphetamine-binding is coupled with G(s)- or G(12)/G(13) G alpha protein subtypes. In Homo sapiens (Human), this protein is Trace amine-associated receptor 1.